Consider the following 100-residue polypeptide: uncharacterized protein (100 aa).

The protein localises to the cytoplasm. Its subcellular location is the endoplasmic reticulum. This is an uncharacterized protein from Schizosaccharomyces pombe (strain 972 / ATCC 24843) (Fission yeast).